The sequence spans 518 residues: Receptor-interacting serine/threonine-protein kinase 3 (518 aa).

Position 2 is a phosphoserine (Ser-2). One can recognise a Protein kinase domain in the interval 21–287; the sequence is LENQELVGKG…ECLPKTDEVF (267 aa). Residue 27–35 coordinates ATP; that stretch reads VGKGGFGTV. Residue Lys-42 forms a Glycyl lysine isopeptide (Lys-Gly) (interchain with G-Cter in ubiquitin) linkage. Lys-50 serves as a coordination point for ATP. Asp-142 acts as the Proton acceptor in catalysis. Residue Ser-164 is modified to Phosphoserine. At Thr-182 the chain carries Phosphothreonine. Phosphoserine; by autocatalysis is present on residues Ser-199 and Ser-227. Phosphothreonine is present on Thr-252. Residue Ser-299 is modified to Phosphoserine. The residue at position 333 (Thr-333) is a Phosphothreonine. Glycyl lysine isopeptide (Lys-Gly) (interchain with G-Cter in ubiquitin) cross-links involve residues Lys-351 and Lys-363. The tract at residues 355–443 is disordered; that stretch reads EEPPSSVPKK…WSCRTPEPNP (89 aa). The segment covering 384–408 has biased composition (polar residues); that stretch reads TAGTSSDSMAQPPQTPETSTFRNQM. The residue at position 389 (Ser-389) is a Phosphoserine. Residue Thr-401 is modified to Phosphothreonine. The RIP homotypic interaction motif (RHIM) signature appears at 450–466; the sequence is VNIYNCSGVQVGDNNYL. The segment at 476-518 is disordered; that stretch reads TWGLAPSGKGRGLQHPPPVGSQEGPKDPEAWSRPQGWYNHSGK. Residue Lys-518 forms a Glycyl lysine isopeptide (Lys-Gly) (interchain with G-Cter in ubiquitin) linkage.

This sequence belongs to the protein kinase superfamily. TKL Ser/Thr protein kinase family. In terms of assembly, interacts (via RIP homotypic interaction motif) with RIPK1 (via RIP homotypic interaction motif); this interaction induces RIPK1 phosphorylation and formation of a RIPK1-RIPK3 necrosis-inducing complex. Interacts with MLKL; the interaction is direct and triggers necroptosis. Interacts with ZBP1 (via RIP homotypic interaction motif); interaction with ZBP1 activates RIPK3, triggering necroptosis. Upon TNF-induced necrosis, the RIPK1-RIPK3 dimer further interacts with PGAM5 and MLKL; the formation of this complex leads to PGAM5 phosphorylation and increase in PGAM5 phosphatase activity. Binds TRAF2 and is recruited to the TNFR-1 signaling complex. Interacts with PYGL, GLUL and GLUD1; these interactions result in activation of these metabolic enzymes. Interacts with BIRC2/c-IAP1, BIRC3/c-IAP2 and XIAP/BIRC4. Interacts with ARHGEF2. Interacts with PELI1 (via atypical FHA domain); the phosphorylated form at Thr-182 binds preferentially to PELI1. Interacts with BUB1B, TRAF2 and STUB1. Interacts with CASP6. Component of the AIM2 PANoptosome complex, a multiprotein complex that drives inflammatory cell death (PANoptosis). (Microbial infection) Interacts (via RIP homotypic interaction motif/RHIM) with herpes simplex virus 1/HHV-1 protein RIR1/ICP6 (via RHIM); this interaction may induce heteromeric amyloid assemblies and prevent necroptosis activation. As to quaternary structure, (Microbial infection) Interacts (via RIP homotypic interaction motif/RHIM) with herpes simplex virus 2/HHV-2 protein RIR1/ICP10 (via RHIM); this interaction prevents necroptosis activation. (Microbial infection) Proteolytically cleaved by S.flexneri OspD3 within the RIP homotypic interaction motif (RHIM), leading to its degradation and inhibition of necroptosis. In terms of processing, RIPK1 and RIPK3 undergo reciprocal auto- and trans-phosphorylation. Autophosphorylated following interaction with ZBP1. Phosphorylation of Ser-199 plays a role in the necroptotic function of RIPK3. Autophosphorylates at Ser-227 following activation by ZBP1: phosphorylation at these sites is a hallmark of necroptosis and is required for binding MLKL. Phosphorylation at Thr-182 is important for its kinase activity, interaction with PELI1 and PELI1-mediated 'Lys-48'-linked polyubiquitination and for its ability to mediate TNF-induced necroptosis. Post-translationally, polyubiquitinated with 'Lys-48' and 'Lys-63'-linked chains by BIRC2/c-IAP1 and BIRC3/c-IAP2, leading to activation of NF-kappa-B. Polyubiquitinated with 'Lys-48'-linked chains by PELI1 leading to its subsequent proteasome-dependent degradation. Ubiquitinated by STUB1 leading to its subsequent proteasome-dependent degradation. Deubiquitinated by USP22. As to expression, highly expressed in the pancreas. Detected at lower levels in heart, placenta, lung and kidney. Expression is significantly increased in colon and lung cancers.

The protein resides in the cytoplasm. It localises to the cytosol. It is found in the nucleus. The enzyme catalyses L-seryl-[protein] + ATP = O-phospho-L-seryl-[protein] + ADP + H(+). It carries out the reaction L-threonyl-[protein] + ATP = O-phospho-L-threonyl-[protein] + ADP + H(+). Its activity is regulated as follows. Activity is stimulated by ZBP1, which senses double-stranded Z-RNA structures. RIPK3-dependent necroptosis is inhibited by RIPK1: RIPK1 prevents the ZBP1-induced activation of RIPK3 via FADD-mediated recruitment of CASP8, which cleaves RIPK1 and limits TNF-induced necroptosis. Functionally, serine/threonine-protein kinase that activates necroptosis and apoptosis, two parallel forms of cell death. Necroptosis, a programmed cell death process in response to death-inducing TNF-alpha family members, is triggered by RIPK3 following activation by ZBP1. Activated RIPK3 forms a necrosis-inducing complex and mediates phosphorylation of MLKL, promoting MLKL localization to the plasma membrane and execution of programmed necrosis characterized by calcium influx and plasma membrane damage. In addition to TNF-induced necroptosis, necroptosis can also take place in the nucleus in response to orthomyxoviruses infection: following ZBP1 activation, which senses double-stranded Z-RNA structures, nuclear RIPK3 catalyzes phosphorylation and activation of MLKL, promoting disruption of the nuclear envelope and leakage of cellular DNA into the cytosol. Also regulates apoptosis: apoptosis depends on RIPK1, FADD and CASP8, and is independent of MLKL and RIPK3 kinase activity. Phosphorylates RIPK1: RIPK1 and RIPK3 undergo reciprocal auto- and trans-phosphorylation. In some cell types, also able to restrict viral replication by promoting cell death-independent responses. In response to Zika virus infection in neurons, promotes a cell death-independent pathway that restricts viral replication: together with ZBP1, promotes a death-independent transcriptional program that modifies the cellular metabolism via up-regulation expression of the enzyme ACOD1/IRG1 and production of the metabolite itaconate. Itaconate inhibits the activity of succinate dehydrogenase, generating a metabolic state in neurons that suppresses replication of viral genomes. RIPK3 binds to and enhances the activity of three metabolic enzymes: GLUL, GLUD1, and PYGL. These metabolic enzymes may eventually stimulate the tricarboxylic acid cycle and oxidative phosphorylation, which could result in enhanced ROS production. In terms of biological role, (Microbial infection) In case of herpes simplex virus 1/HHV-1 infection, forms heteromeric amyloid structures with HHV-1 protein RIR1/ICP6 which may inhibit RIPK3-mediated necroptosis, thereby preventing host cell death pathway and allowing viral evasion. The protein is Receptor-interacting serine/threonine-protein kinase 3 of Homo sapiens (Human).